The chain runs to 196 residues: uncharacterized protein (196 aa).

Residues 12–66 (LRAAREAQKMSQRELSARSGLTQSHISQIERGTMEPGLGSLVDVARALDLEIVLA) enclose the HTH cro/C1-type domain. The segment at residues 23–42 (QRELSARSGLTQSHISQIER) is a DNA-binding region (H-T-H motif). Residues 174-196 (VHRDRDDAVPRSAYALDEEDDNA) are disordered.

This is an uncharacterized protein from Sinorhizobium fredii (strain NBRC 101917 / NGR234).